The chain runs to 265 residues: Urease accessory protein UreH (265 aa).

The protein belongs to the UreD family. UreH, UreF and UreG form a complex that acts as a GTP-hydrolysis-dependent molecular chaperone, activating the urease apoprotein by helping to assemble the nickel containing metallocenter of UreC. The UreE protein probably delivers the nickel.

It is found in the cytoplasm. Its function is as follows. Required for maturation of urease via the functional incorporation of the urease nickel metallocenter. The sequence is that of Urease accessory protein UreH from Helicobacter pylori (strain J99 / ATCC 700824) (Campylobacter pylori J99).